The sequence spans 224 residues: Agamous-like MADS-box protein AGL9 homolog (224 aa).

An MADS-box domain is found at 3–57 (RGRVELKRIEGKINRQVTFAKRRNGLLKKAYELSVLCDAEVALIIFSNRGKLYEF). Residues 89–179 (EISSQQEYLK…KQRLMEGSQL (91 aa)) enclose the K-box domain.

In terms of tissue distribution, flower specific.

The protein resides in the nucleus. In terms of biological role, probable transcription factor active in inflorescence development and floral organogenesis. The chain is Agamous-like MADS-box protein AGL9 homolog (TDR5) from Solanum lycopersicum (Tomato).